The chain runs to 224 residues: UPF0758 protein PLES_57141 (224 aa).

The MPN domain occupies 102–224 (ILESPQAVRD…PLSLAEYGWL (123 aa)). Positions 173, 175, and 186 each coordinate Zn(2+). The JAMM motif motif lies at 173–186 (HNHPSGDARPSLAD).

Belongs to the UPF0758 family.

This chain is UPF0758 protein PLES_57141, found in Pseudomonas aeruginosa (strain LESB58).